A 167-amino-acid chain; its full sequence is 2-C-methyl-D-erythritol 2,4-cyclodiphosphate synthase (167 aa).

Positions 15 and 17 each coordinate a divalent metal cation. Residues 15–17 (DIH) and 43–44 (HS) contribute to the 4-CDP-2-C-methyl-D-erythritol 2-phosphate site. An a divalent metal cation-binding site is contributed by histidine 51. Residues 65–67 (DIG), 141–144 (TTNE), and arginine 151 each bind 4-CDP-2-C-methyl-D-erythritol 2-phosphate.

It belongs to the IspF family. In terms of assembly, homotrimer. A divalent metal cation serves as cofactor.

The enzyme catalyses 4-CDP-2-C-methyl-D-erythritol 2-phosphate = 2-C-methyl-D-erythritol 2,4-cyclic diphosphate + CMP. Its pathway is isoprenoid biosynthesis; isopentenyl diphosphate biosynthesis via DXP pathway; isopentenyl diphosphate from 1-deoxy-D-xylulose 5-phosphate: step 4/6. In terms of biological role, involved in the biosynthesis of isopentenyl diphosphate (IPP) and dimethylallyl diphosphate (DMAPP), two major building blocks of isoprenoid compounds. Catalyzes the conversion of 4-diphosphocytidyl-2-C-methyl-D-erythritol 2-phosphate (CDP-ME2P) to 2-C-methyl-D-erythritol 2,4-cyclodiphosphate (ME-CPP) with a corresponding release of cytidine 5-monophosphate (CMP). The chain is 2-C-methyl-D-erythritol 2,4-cyclodiphosphate synthase from Prochlorococcus marinus (strain MIT 9312).